The following is a 555-amino-acid chain: Methionine--tRNA ligase (555 aa).

The 'HIGH' region signature appears at 13–23; that stretch reads PYANGSLHIGH. Residues C144, C147, C157, and C160 each coordinate Zn(2+). Residues 330–334 carry the 'KMSKS' region motif; sequence KISKS. K333 contacts ATP.

The protein belongs to the class-I aminoacyl-tRNA synthetase family. MetG type 1 subfamily. As to quaternary structure, monomer. Zn(2+) is required as a cofactor.

It localises to the cytoplasm. It carries out the reaction tRNA(Met) + L-methionine + ATP = L-methionyl-tRNA(Met) + AMP + diphosphate. Its function is as follows. Is required not only for elongation of protein synthesis but also for the initiation of all mRNA translation through initiator tRNA(fMet) aminoacylation. The chain is Methionine--tRNA ligase from Blochmanniella pennsylvanica (strain BPEN).